We begin with the raw amino-acid sequence, 254 residues long: Alcohol dehydrogenase 1 (254 aa).

10–33 (FVAGLGGIGLDTSREIVKSGPKNL) contributes to the NAD(+) binding site. Serine 138 contributes to the substrate binding site. Tyrosine 151 functions as the Proton acceptor in the catalytic mechanism.

The protein belongs to the short-chain dehydrogenases/reductases (SDR) family. As to quaternary structure, homodimer.

It carries out the reaction a primary alcohol + NAD(+) = an aldehyde + NADH + H(+). It catalyses the reaction a secondary alcohol + NAD(+) = a ketone + NADH + H(+). In Drosophila montana (Fruit fly), this protein is Alcohol dehydrogenase 1 (Adh1).